Consider the following 99-residue polypeptide: DNA-directed RNA polymerase subunit omega (99 aa).

Belongs to the RNA polymerase subunit omega family. The RNAP catalytic core consists of 2 alpha, 1 beta, 1 beta' and 1 omega subunit. When a sigma factor is associated with the core the holoenzyme is formed, which can initiate transcription.

The catalysed reaction is RNA(n) + a ribonucleoside 5'-triphosphate = RNA(n+1) + diphosphate. In terms of biological role, promotes RNA polymerase assembly. Latches the N- and C-terminal regions of the beta' subunit thereby facilitating its interaction with the beta and alpha subunits. The sequence is that of DNA-directed RNA polymerase subunit omega from Deinococcus deserti (strain DSM 17065 / CIP 109153 / LMG 22923 / VCD115).